The following is a 123-amino-acid chain: Small ribosomal subunit protein uS12 (123 aa).

Asp89 is subject to 3-methylthioaspartic acid.

It belongs to the universal ribosomal protein uS12 family. In terms of assembly, part of the 30S ribosomal subunit. Contacts proteins S8 and S17. May interact with IF1 in the 30S initiation complex.

With S4 and S5 plays an important role in translational accuracy. In terms of biological role, interacts with and stabilizes bases of the 16S rRNA that are involved in tRNA selection in the A site and with the mRNA backbone. Located at the interface of the 30S and 50S subunits, it traverses the body of the 30S subunit contacting proteins on the other side and probably holding the rRNA structure together. The combined cluster of proteins S8, S12 and S17 appears to hold together the shoulder and platform of the 30S subunit. The polypeptide is Small ribosomal subunit protein uS12 (Methylorubrum extorquens (strain PA1) (Methylobacterium extorquens)).